A 183-amino-acid polypeptide reads, in one-letter code: Orotate phosphoribosyltransferase (183 aa).

5-phospho-alpha-D-ribose 1-diphosphate is bound by residues Arg21, Lys88, and 112–120 (EDVVTTGES). Thr116 and Arg144 together coordinate orotate.

It belongs to the purine/pyrimidine phosphoribosyltransferase family. PyrE subfamily. In terms of assembly, homodimer. Mg(2+) is required as a cofactor.

The enzyme catalyses orotidine 5'-phosphate + diphosphate = orotate + 5-phospho-alpha-D-ribose 1-diphosphate. The protein operates within pyrimidine metabolism; UMP biosynthesis via de novo pathway; UMP from orotate: step 1/2. Functionally, catalyzes the transfer of a ribosyl phosphate group from 5-phosphoribose 1-diphosphate to orotate, leading to the formation of orotidine monophosphate (OMP). The chain is Orotate phosphoribosyltransferase from Thermus thermophilus (strain ATCC BAA-163 / DSM 7039 / HB27).